The primary structure comprises 179 residues: Large ribosomal subunit protein uL5 (179 aa).

Belongs to the universal ribosomal protein uL5 family. In terms of assembly, part of the 50S ribosomal subunit; part of the 5S rRNA/L5/L18/L25 subcomplex. Contacts the 5S rRNA and the P site tRNA. Forms a bridge to the 30S subunit in the 70S ribosome.

Its function is as follows. This is one of the proteins that bind and probably mediate the attachment of the 5S RNA into the large ribosomal subunit, where it forms part of the central protuberance. In the 70S ribosome it contacts protein S13 of the 30S subunit (bridge B1b), connecting the 2 subunits; this bridge is implicated in subunit movement. Contacts the P site tRNA; the 5S rRNA and some of its associated proteins might help stabilize positioning of ribosome-bound tRNAs. In Photorhabdus laumondii subsp. laumondii (strain DSM 15139 / CIP 105565 / TT01) (Photorhabdus luminescens subsp. laumondii), this protein is Large ribosomal subunit protein uL5.